The following is a 1103-amino-acid chain: Mediator of RNA polymerase II transcription subunit 14 (1103 aa).

Disordered stretches follow at residues 1–63 (MPGV…GYKQ), 120–140 (VPPQ…LGNQ), and 1054–1103 (LETK…ITID). Positions 1073–1103 (SGNTVQNARLENKSPQKAAATHSNADVITID) are enriched in polar residues.

The protein belongs to the Mediator complex subunit 14 family. Component of the Mediator complex.

The protein localises to the nucleus. Its function is as follows. Component of the Mediator complex, a coactivator involved in the regulated transcription of nearly all RNA polymerase II-dependent genes. Mediator functions as a bridge to convey information from gene-specific regulatory proteins to the basal RNA polymerase II transcription machinery. Mediator is recruited to promoters by direct interactions with regulatory proteins and serves as a scaffold for the assembly of a functional preinitiation complex with RNA polymerase II and the general transcription factors. This chain is Mediator of RNA polymerase II transcription subunit 14 (rgr1), found in Aspergillus terreus (strain NIH 2624 / FGSC A1156).